A 62-amino-acid chain; its full sequence is UPF0434 protein RHECIAT_CH0004260 (62 aa).

Belongs to the UPF0434 family.

In Rhizobium etli (strain CIAT 652), this protein is UPF0434 protein RHECIAT_CH0004260.